The chain runs to 343 residues: Insertion element IS630 uncharacterized 39 kDa protein (343 aa).

In Shigella sonnei, this protein is Insertion element IS630 uncharacterized 39 kDa protein.